The chain runs to 35 residues: MSDIN-like toxin proprotein 1 (35 aa).

Positions 1–10 (MSDINATRLP) are excised as a propeptide. A cross-link (cyclopeptide (Ile-Pro)) is located at residues 11–20 (IIIVLGLIIP). Positions 21–35 (LCVSDIEMILTRGER) are excised as a propeptide.

It belongs to the MSDIN fungal toxin family. In terms of processing, processed by the macrocyclase-peptidase enzyme POPB to yield a toxic cyclic decapeptide. POPB first removes 10 residues from the N-terminus. Conformational trapping of the remaining peptide forces the enzyme to release this intermediate rather than proceed to macrocyclization. The enzyme rebinds the remaining peptide in a different conformation and catalyzes macrocyclization of the N-terminal 10 residues.

In terms of biological role, probable toxin that belongs to the MSDIN-like toxin family responsible for a large number of food poisoning cases and deaths. This is MSDIN-like toxin proprotein 1 from Amanita rimosa.